The primary structure comprises 416 residues: Phosphoglycerate kinase (416 aa).

14 residues coordinate (2R)-3-phosphoglycerate: valine 23, aspartate 24, phenylalanine 25, asparagine 26, glutamine 39, arginine 40, serine 63, histidine 64, glycine 66, arginine 67, leucine 122, arginine 123, histidine 170, and arginine 171. Glycine 214 serves as a coordination point for ADP. Glycine 214 is a CDP binding site. Residues alanine 215 and lysine 216 each contribute to the AMP site. Alanine 215 serves as a coordination point for ATP. Alanine 215 is a Mg(2+) binding site. Residue aspartate 219 participates in CDP binding. Aspartate 219 is a binding site for Mg(2+). Lysine 220 provides a ligand contact to AMP. Lysine 220 lines the ATP pocket. An ADP-binding site is contributed by glycine 238. Glycine 238 lines the CDP pocket. AMP-binding residues include glycine 239 and glycine 312. ATP contacts are provided by glycine 239 and glycine 312. CDP-binding residues include glycine 337, alanine 339, and phenylalanine 342. Phenylalanine 342 contacts ADP. Residue glutamate 343 coordinates AMP. The ATP site is built by glutamate 343, aspartate 374, and threonine 375. Aspartate 374 is a Mg(2+) binding site.

It belongs to the phosphoglycerate kinase family. As to quaternary structure, monomer. It depends on Mg(2+) as a cofactor.

The protein resides in the cytoplasm. It localises to the mitochondrion. The enzyme catalyses (2R)-3-phosphoglycerate + ATP = (2R)-3-phospho-glyceroyl phosphate + ADP. The protein operates within carbohydrate degradation; glycolysis; pyruvate from D-glyceraldehyde 3-phosphate: step 2/5. Functionally, catalyzes one of the two ATP producing reactions in the glycolytic pathway via the reversible conversion of 1,3-diphosphoglycerate to 3-phosphoglycerate. Both L- and D- forms of purine and pyrimidine nucleotides can be used as substrates, but the activity is much lower on pyrimidines. Negatively regulates the biosynthesis of acetyl-CoA from pyruvate in the mitochondrion. The sequence is that of Phosphoglycerate kinase (pgk1) from Hypocrea jecorina (Trichoderma reesei).